The sequence spans 349 residues: tRNA N6-adenosine threonylcarbamoyltransferase (349 aa).

Fe cation-binding residues include H117 and H121. Substrate contacts are provided by residues L140–G144, D173, G186, and N284. Residue D312 coordinates Fe cation.

The protein belongs to the KAE1 / TsaD family. Requires Fe(2+) as cofactor.

It is found in the cytoplasm. It catalyses the reaction L-threonylcarbamoyladenylate + adenosine(37) in tRNA = N(6)-L-threonylcarbamoyladenosine(37) in tRNA + AMP + H(+). In terms of biological role, required for the formation of a threonylcarbamoyl group on adenosine at position 37 (t(6)A37) in tRNAs that read codons beginning with adenine. Is involved in the transfer of the threonylcarbamoyl moiety of threonylcarbamoyl-AMP (TC-AMP) to the N6 group of A37, together with TsaE and TsaB. TsaD likely plays a direct catalytic role in this reaction. The protein is tRNA N6-adenosine threonylcarbamoyltransferase of Psychrobacter arcticus (strain DSM 17307 / VKM B-2377 / 273-4).